The following is a 156-amino-acid chain: Protein-export protein SecB (156 aa).

This sequence belongs to the SecB family. In terms of assembly, homotetramer, a dimer of dimers. One homotetramer interacts with 1 SecA dimer.

Its subcellular location is the cytoplasm. Functionally, one of the proteins required for the normal export of preproteins out of the cell cytoplasm. It is a molecular chaperone that binds to a subset of precursor proteins, maintaining them in a translocation-competent state. It also specifically binds to its receptor SecA. This chain is Protein-export protein SecB, found in Serratia proteamaculans (strain 568).